A 327-amino-acid polypeptide reads, in one-letter code: Tetraacyldisaccharide 4'-kinase (327 aa).

54-61 serves as a coordination point for ATP; it reads TTGGTGKT. The disordered stretch occupies residues 78-106; it reads PHILSRGHGGRERGPIGVNPNRSTPRDVG.

It belongs to the LpxK family.

The catalysed reaction is a lipid A disaccharide + ATP = a lipid IVA + ADP + H(+). The protein operates within glycolipid biosynthesis; lipid IV(A) biosynthesis; lipid IV(A) from (3R)-3-hydroxytetradecanoyl-[acyl-carrier-protein] and UDP-N-acetyl-alpha-D-glucosamine: step 6/6. Functionally, transfers the gamma-phosphate of ATP to the 4'-position of a tetraacyldisaccharide 1-phosphate intermediate (termed DS-1-P) to form tetraacyldisaccharide 1,4'-bis-phosphate (lipid IVA). The protein is Tetraacyldisaccharide 4'-kinase of Gluconobacter oxydans (strain 621H) (Gluconobacter suboxydans).